We begin with the raw amino-acid sequence, 103 residues long: UPF0145 protein BCE_1095 (103 aa).

This sequence belongs to the UPF0145 family.

The polypeptide is UPF0145 protein BCE_1095 (Bacillus cereus (strain ATCC 10987 / NRS 248)).